Here is a 164-residue protein sequence, read N- to C-terminus: UPF0561 protein C2orf68 homolog (164 aa).

Basic and acidic residues-rich tracts occupy residues 1–13 (MEVI…ESVK) and 35–49 (IARD…QAKE). Positions 1–98 (MEVIRDGEGE…WNESSSGTEM (98 aa)) are disordered. Residues 50–64 (KQRRRHTNTPRRPRR) show a composition bias toward basic residues.

The protein belongs to the UPF0561 family.

In Danio rerio (Zebrafish), this protein is UPF0561 protein C2orf68 homolog.